We begin with the raw amino-acid sequence, 238 residues long: uncharacterized protein (238 aa).

Residues 1–20 (MPNLHSLPLGTRPENAIRNN) are disordered.

Belongs to the PEP2 family.

This is an uncharacterized protein from Emericella nidulans (strain FGSC A4 / ATCC 38163 / CBS 112.46 / NRRL 194 / M139) (Aspergillus nidulans).